Here is an 879-residue protein sequence, read N- to C-terminus: Metabotropic glutamate receptor 3 (879 aa).

Residues methionine 1–serine 22 form the signal peptide. Residues leucine 23–tryptophan 576 are Extracellular-facing. Cysteine 57 and cysteine 99 are joined by a disulfide. Residues serine 151 and alanine 172 to threonine 174 each bind L-glutamate. An N-linked (GlcNAc...) asparagine glycan is attached at asparagine 209. Residue tyrosine 222 coordinates L-glutamate. 7 cysteine pairs are disulfide-bonded: cysteine 240–cysteine 527, cysteine 361–cysteine 373, cysteine 412–cysteine 419, cysteine 509–cysteine 528, cysteine 513–cysteine 531, cysteine 534–cysteine 546, and cysteine 549–cysteine 562. Asparagine 292 is a glycosylation site (N-linked (GlcNAc...) asparagine). Aspartate 301 contacts L-glutamate. Residue lysine 389 participates in L-glutamate binding. 2 N-linked (GlcNAc...) asparagine glycosylation sites follow: asparagine 414 and asparagine 439. The chain crosses the membrane as a helical span at residues alanine 577 to isoleucine 599. Over lysine 600–glutamate 613 the chain is Cytoplasmic. Residues leucine 614–alanine 634 traverse the membrane as a helical segment. Topologically, residues lysine 635–arginine 645 are extracellular. Residues leucine 646–asparagine 664 form a helical membrane-spanning segment. Over cysteine 665–glutamine 688 the chain is Cytoplasmic. The helical transmembrane segment at valine 689 to leucine 709 threads the bilayer. The Extracellular segment spans residues glutamate 710 to aspartate 734. Residues serine 735–phenylalanine 756 traverse the membrane as a helical segment. Topologically, residues lysine 757–lysine 769 are cytoplasmic. A helical membrane pass occupies residues phenylalanine 770–threonine 792. The Extracellular portion of the chain corresponds to serine 793–threonine 802. The helical transmembrane segment at methionine 803–phenylalanine 828 threads the bilayer. At glutamine 829 to leucine 879 the chain is on the cytoplasmic side.

It belongs to the G-protein coupled receptor 3 family. In terms of assembly, interacts with TAMALIN.

The protein localises to the cell membrane. In terms of biological role, G-protein coupled receptor for glutamate. Ligand binding causes a conformation change that triggers signaling via guanine nucleotide-binding proteins (G proteins) and modulates the activity of down-stream effectors. Signaling inhibits adenylate cyclase activity. The chain is Metabotropic glutamate receptor 3 (Grm3) from Mus musculus (Mouse).